The following is a 587-amino-acid chain: Arginine--tRNA ligase (587 aa).

The 'HIGH' region signature appears at 127-137 (PNLAKEMHVGH).

It belongs to the class-I aminoacyl-tRNA synthetase family. Monomer.

The protein localises to the cytoplasm. The catalysed reaction is tRNA(Arg) + L-arginine + ATP = L-arginyl-tRNA(Arg) + AMP + diphosphate. The polypeptide is Arginine--tRNA ligase (Pseudomonas paraeruginosa (strain DSM 24068 / PA7) (Pseudomonas aeruginosa (strain PA7))).